The primary structure comprises 416 residues: Adenylosuccinate synthetase (416 aa).

GTP is bound by residues 13–19 (GDEGKGK) and 41–43 (GHT). Aspartate 14 serves as the catalytic Proton acceptor. Mg(2+)-binding residues include aspartate 14 and glycine 41. IMP contacts are provided by residues 14–17 (DEGK), 39–42 (NAGH), threonine 126, arginine 140, glutamine 220, threonine 235, and arginine 299. Histidine 42 functions as the Proton donor in the catalytic mechanism. Substrate is bound at residue 295 to 301 (VSTGRKR). GTP contacts are provided by residues arginine 301, 327–329 (KLD), and 405–407 (STS).

Belongs to the adenylosuccinate synthetase family. Homodimer. Mg(2+) is required as a cofactor.

The protein resides in the cytoplasm. It carries out the reaction IMP + L-aspartate + GTP = N(6)-(1,2-dicarboxyethyl)-AMP + GDP + phosphate + 2 H(+). Its pathway is purine metabolism; AMP biosynthesis via de novo pathway; AMP from IMP: step 1/2. Its function is as follows. Plays an important role in the de novo pathway of purine nucleotide biosynthesis. Catalyzes the first committed step in the biosynthesis of AMP from IMP. This Campylobacter jejuni subsp. jejuni serotype O:6 (strain 81116 / NCTC 11828) protein is Adenylosuccinate synthetase.